The chain runs to 834 residues: 5-hydroxytryptamine receptor 2A (834 aa).

The Extracellular segment spans residues 1–230 (MAHETSFNDA…TQLLRMAVTS (230 aa)). Residues 56–75 (TDDGQLEDTNNNNNSKRYYS) form a disordered region. N-linked (GlcNAc...) asparagine glycosylation is found at N68, N97, N161, N175, N183, N194, N203, and N209. A helical transmembrane segment spans residues 231 to 253 (VLLGLMILVTIIGNVFVIAAIIL). Residues 254–263 (ERNLQNVANY) lie on the Cytoplasmic side of the membrane. The chain crosses the membrane as a helical span at residues 264-285 (LVASLAVADLFVACLVMPLGAV). Residues 286–300 (YEISQGWILGPELCD) lie on the Extracellular side of the membrane. C299 and C378 are joined by a disulfide. Residues 301 to 322 (IWTSCDVLCCTASILHLVAIAV) traverse the membrane as a helical segment. The Cytoplasmic segment spans residues 323–341 (DRYWAVTNIDYIHSRTSNR). A helical transmembrane segment spans residues 342–364 (VFMMIFCVWTAAVIVSLAPQFGW). The Extracellular portion of the chain corresponds to 365 to 391 (KDPDYLQRIEQQKCMVSQDVSYQVFAT). A helical membrane pass occupies residues 392–413 (CCTFYVPLLVILALYWKIYQTA). Over 414–752 (RKRIHRRRPR…AKRERKAAKT (339 aa)) the chain is Cytoplasmic. Disordered stretches follow at residues 420 to 442 (RRPR…ATDT), 460 to 516 (KTGS…STSG), 531 to 599 (QQGK…SEDQ), 617 to 640 (LEQV…TSNA), and 674 to 743 (STLT…TLEA). 2 stretches are compositionally biased toward polar residues: residues 482–502 (GNST…SNVD) and 532–542 (QGKSTAKSSAA). The segment covering 551-564 (RQEDDGQRPEHGEQ) has biased composition (basic and acidic residues). Residues 565–575 (EDREELEDQDE) are compositionally biased toward acidic residues. Residues 582 to 593 (TTATSATTAAGT) are compositionally biased toward low complexity. A compositionally biased stretch (polar residues) spans 674 to 694 (STLTSCNQSHPLCGTANESPS). Positions 702–723 (QPTTPQQQPHQQAHQQQQQQQQ) are enriched in low complexity. The helical transmembrane segment at 753–776 (LAIITGAFVVCWLPFFVMALTMPL) threads the bilayer. Residues 777–785 (CAACQISDS) lie on the Extracellular side of the membrane. The chain crosses the membrane as a helical span at residues 786–808 (VASLFLWLGYFNSTLNPVIYTIF). The Cytoplasmic segment spans residues 809 to 834 (SPEFRQAFKRILFGGHRPVHYRSGKL).

The protein belongs to the G-protein coupled receptor 1 family.

The protein resides in the cell membrane. Functionally, this is one of the several different receptors for 5-hydroxytryptamine (serotonin), a biogenic hormone that functions as a neurotransmitter, a hormone, and a mitogen. The activity of this receptor is mediated by G proteins which inhibit adenylate cyclase. In Drosophila melanogaster (Fruit fly), this protein is 5-hydroxytryptamine receptor 2A (5-HT1A).